The primary structure comprises 605 residues: E3 ubiquitin-protein ligase synoviolin A (605 aa).

Residues 1–19 (MTGASLALTAAVVAHAYYL) traverse the membrane as a helical segment. At 20 to 35 (KNQFYPTVVYLTKSSP) the chain is on the lumenal side. The chain crosses the membrane as a helical span at residues 36–56 (SMAVLYIQAFVLVFLLGKFMG). Residues 57 to 92 (KVFFGQLRAAEMEHLLERSWYAVTETCLAFTVFRDD) are Cytoplasmic-facing. Residues 93-113 (FSPRFVALFTLLLFLKCFHWL) form a helical membrane-spanning segment. Topologically, residues 114 to 129 (AEDRVDFMERSPNISW) are lumenal. A helical transmembrane segment spans residues 130–150 (LFHFRILALMLLLGVLDAFFV). Residues 151 to 163 (SHAYHSLVIRGAS) are Cytoplasmic-facing. The chain crosses the membrane as a helical span at residues 164-184 (VQLVFGFEYAILMTVILTVFI). Over 185–218 (KYILHSVDLQSENPWDNKAVYMLYTELFTGFIKV) the chain is Lumenal. A helical membrane pass occupies residues 219–239 (LLYVAFMTIMVKVHTFPLFAI). Positions 230-264 (KVHTFPLFAIRPMYLAMRQFKKAVTDAIMSRRAIR) are interaction with p53/TP53. Residues 240-605 (RPMYLAMRQF…KLETGTTDSQ (366 aa)) lie on the Cytoplasmic side of the membrane. Residues cysteine 285, cysteine 288, cysteine 301, histidine 303, histidine 306, cysteine 309, cysteine 320, and cysteine 323 each coordinate Zn(2+). An RING-type; atypical zinc finger spans residues 285–324 (CIICREEMVTGAKRLPCNHIFHTSCLRSWFQRQQTCPTCR). The span at 334-355 (TQPQTPTEQQNQHQNQAQQQPT) shows a compositional bias: low complexity. A disordered region spans residues 334 to 433 (TQPQTPTEQQ…QPGAALPGFP (100 aa)). Over residues 356–391 (PVIPPQPNFPPGILPPFPPGMFPLWPPMGPFPPVPG) the composition is skewed to pro residues. A compositionally biased stretch (low complexity) spans 403–414 (PGSSSGSSPRPG). The segment covering 415–424 (ETSNVGSESQ) has biased composition (polar residues). The stretch at 465–496 (EELRAMEGHERQNLEARLQCLQNIHTLLDAAM) forms a coiled coil. The segment at 513–605 (QPPISSTSTS…KLETGTTDSQ (93 aa)) is disordered. Positions 516–539 (ISSTSTSTSSAASASTAPTTSNIS) are enriched in low complexity. Residues 546–555 (DTTSTVTNTE) are compositionally biased toward polar residues. Residues 556–579 (SSQQSAPPAPVSVETLSGAEGGET) are compositionally biased toward low complexity.

The protein belongs to the HRD1 family. As to quaternary structure, homodimer.

The protein resides in the endoplasmic reticulum membrane. The enzyme catalyses S-ubiquitinyl-[E2 ubiquitin-conjugating enzyme]-L-cysteine + [acceptor protein]-L-lysine = [E2 ubiquitin-conjugating enzyme]-L-cysteine + N(6)-ubiquitinyl-[acceptor protein]-L-lysine.. The protein operates within protein modification; protein ubiquitination. In terms of biological role, E3 ubiquitin-protein ligase which accepts ubiquitin specifically from endoplasmic reticulum-associated UBC7 E2 ligase and transfers it to substrates, promoting their degradation. Component of the endoplasmic reticulum quality control (ERQC) system also called ER-associated degradation (ERAD) involved in ubiquitin-dependent degradation of misfolded endoplasmic reticulum proteins. Also promotes the degradation of normal but naturally short-lived proteins. Protects cells from ER stress-induced apoptosis. Sequesters p53 in the cytoplasm and promotes its degradation, thereby negatively regulating its biological function in transcription, cell cycle regulation and apoptosis. The polypeptide is E3 ubiquitin-protein ligase synoviolin A (syvn1-a) (Xenopus laevis (African clawed frog)).